We begin with the raw amino-acid sequence, 364 residues long: S-adenosylmethionine:tRNA ribosyltransferase-isomerase (364 aa).

Belongs to the QueA family. In terms of assembly, monomer.

The protein resides in the cytoplasm. The enzyme catalyses 7-aminomethyl-7-carbaguanosine(34) in tRNA + S-adenosyl-L-methionine = epoxyqueuosine(34) in tRNA + adenine + L-methionine + 2 H(+). Its pathway is tRNA modification; tRNA-queuosine biosynthesis. Its function is as follows. Transfers and isomerizes the ribose moiety from AdoMet to the 7-aminomethyl group of 7-deazaguanine (preQ1-tRNA) to give epoxyqueuosine (oQ-tRNA). The sequence is that of S-adenosylmethionine:tRNA ribosyltransferase-isomerase from Bradyrhizobium sp. (strain BTAi1 / ATCC BAA-1182).